The primary structure comprises 318 residues: Probable arabinan endo-1,5-alpha-L-arabinosidase C (318 aa).

Residues 1-28 form the signal peptide; the sequence is MLSFVLLLCVALVNAYSDPGACSGTCWA. D30 acts as the Proton acceptor in catalysis. 3 N-linked (GlcNAc...) asparagine glycosylation sites follow: N72, N80, and N188. Residue E196 is the Proton donor of the active site. N277 is a glycosylation site (N-linked (GlcNAc...) asparagine).

It belongs to the glycosyl hydrolase 43 family.

It localises to the secreted. The catalysed reaction is Endohydrolysis of (1-&gt;5)-alpha-arabinofuranosidic linkages in (1-&gt;5)-arabinans.. The protein operates within glycan metabolism; L-arabinan degradation. Functionally, endo-1,5-alpha-L-arabinanase involved in degradation of pectin. Its preferred substrate is linear 1,5-alpha-L-arabinan. This chain is Probable arabinan endo-1,5-alpha-L-arabinosidase C (abnC), found in Aspergillus niger (strain ATCC MYA-4892 / CBS 513.88 / FGSC A1513).